Consider the following 232-residue polypeptide: Large ribosomal subunit protein uL1 (232 aa).

It belongs to the universal ribosomal protein uL1 family. In terms of assembly, part of the 50S ribosomal subunit.

Binds directly to 23S rRNA. The L1 stalk is quite mobile in the ribosome, and is involved in E site tRNA release. Its function is as follows. Protein L1 is also a translational repressor protein, it controls the translation of the L11 operon by binding to its mRNA. In Bacillus licheniformis (strain ATCC 14580 / DSM 13 / JCM 2505 / CCUG 7422 / NBRC 12200 / NCIMB 9375 / NCTC 10341 / NRRL NRS-1264 / Gibson 46), this protein is Large ribosomal subunit protein uL1.